The chain runs to 343 residues: Ferredoxin--NADP reductase (343 aa).

Residues Asp-31, Lys-39, Tyr-43, Val-83, Ile-118, Asp-285, and Ser-326 each coordinate FAD.

The protein belongs to the ferredoxin--NADP reductase type 2 family. In terms of assembly, homodimer. FAD is required as a cofactor.

It carries out the reaction 2 reduced [2Fe-2S]-[ferredoxin] + NADP(+) + H(+) = 2 oxidized [2Fe-2S]-[ferredoxin] + NADPH. The polypeptide is Ferredoxin--NADP reductase (Staphylococcus saprophyticus subsp. saprophyticus (strain ATCC 15305 / DSM 20229 / NCIMB 8711 / NCTC 7292 / S-41)).